Here is a 589-residue protein sequence, read N- to C-terminus: ATP-dependent lipid A-core flippase (589 aa).

The next 5 helical transmembrane spans lie at 29 to 49 (LLLV…TGFL), 70 to 90 (WLPV…YITD), 157 to 177 (VIGA…TILV), 261 to 281 (MIGA…ALAG), and 283 to 303 (LTAG…PGLK). The 283-residue stretch at 32 to 314 (VAALIAALIE…LTNVQNMVQR (283 aa)) folds into the ABC transmembrane type-1 domain. The region spanning 346 to 582 (IEFRDVTARY…GGLYSHLHGM (237 aa)) is the ABC transporter domain. Residue 380-387 (GRSGSGKS) participates in ATP binding.

Belongs to the ABC transporter superfamily. Lipid exporter (TC 3.A.1.106) family. Homodimer.

It is found in the cell inner membrane. It catalyses the reaction ATP + H2O + lipid A-core oligosaccharideSide 1 = ADP + phosphate + lipid A-core oligosaccharideSide 2.. Its function is as follows. Involved in lipopolysaccharide (LPS) biosynthesis. Translocates lipid A-core from the inner to the outer leaflet of the inner membrane. Transmembrane domains (TMD) form a pore in the inner membrane and the ATP-binding domain (NBD) is responsible for energy generation. The chain is ATP-dependent lipid A-core flippase from Xanthomonas euvesicatoria pv. vesicatoria (strain 85-10) (Xanthomonas campestris pv. vesicatoria).